Consider the following 286-residue polypeptide: MAGAKEIRSKIASIKSTQKITSAMEKVAVSKMRKAQMRMAASRPYAERIRQVIGHLANANPEYRHPFMIERPVKRAGYIVVSSDRGLCGGLNTNLFKALVKDMSANREQGVEIDLCVIGSKGATFFRIFGGNVVAAISHLGEEPSINDLIGSVKVMLDAYLDGRIDRLSVVSNKFINTMTQKPTVEQLVPLVATPDQDLKHHWDYLYEPDAKELLDGLMVRYVESQVYQAVVENNAAEQAARMIAMKNATDNAGDLIKELQLIYNKARQAAITQEISEIVGGAAAV.

Belongs to the ATPase gamma chain family. As to quaternary structure, F-type ATPases have 2 components, CF(1) - the catalytic core - and CF(0) - the membrane proton channel. CF(1) has five subunits: alpha(3), beta(3), gamma(1), delta(1), epsilon(1). CF(0) has three main subunits: a, b and c.

Its subcellular location is the cell inner membrane. In terms of biological role, produces ATP from ADP in the presence of a proton gradient across the membrane. The gamma chain is believed to be important in regulating ATPase activity and the flow of protons through the CF(0) complex. This chain is ATP synthase gamma chain, found in Pseudomonas putida (strain ATCC 700007 / DSM 6899 / JCM 31910 / BCRC 17059 / LMG 24140 / F1).